Reading from the N-terminus, the 81-residue chain is Tissue- and phase-specific nuclear protein (81 aa).

Expressed in oviduct, where expression levels are higher in uterine sections than in tuba sections. No expression detected in small intestine and liver (at protein level).

The protein localises to the nucleus. This chain is Tissue- and phase-specific nuclear protein, found in Podarcis siculus (Italian wall lizard).